Reading from the N-terminus, the 276-residue chain is Rho-related protein racO (276 aa).

A GTP-binding site is contributed by 11–18 (GDGLIGKT). The Effector region motif lies at 34–42 (YSSFDSEYL). Residues 60–64 (ENDGF) and 124–127 (IKTD) each bind GTP. Residues 199–276 (FKNNNNNNNY…NKTTNKCKIS (78 aa)) form a disordered region. The segment covering 200 to 270 (KNNNNNNNYN…SYKNHNNKTT (71 aa)) has biased composition (low complexity). The residue at position 273 (Cys273) is a Cysteine methyl ester. A lipid anchor (S-geranylgeranyl cysteine) is attached at Cys273. Positions 274–276 (KIS) are cleaved as a propeptide — removed in mature form.

It belongs to the small GTPase superfamily. Rho family.

It is found in the cell membrane. The sequence is that of Rho-related protein racO (racO) from Dictyostelium discoideum (Social amoeba).